Reading from the N-terminus, the 190-residue chain is Xanthine phosphoribosyltransferase (190 aa).

Xanthine contacts are provided by leucine 20 and asparagine 27. 128-132 (ANGKA) lines the 5-phospho-alpha-D-ribose 1-diphosphate pocket. Residue lysine 156 participates in xanthine binding.

The protein belongs to the purine/pyrimidine phosphoribosyltransferase family. Xpt subfamily. Homodimer.

The protein localises to the cytoplasm. It carries out the reaction XMP + diphosphate = xanthine + 5-phospho-alpha-D-ribose 1-diphosphate. The protein operates within purine metabolism; XMP biosynthesis via salvage pathway; XMP from xanthine: step 1/1. In terms of biological role, converts the preformed base xanthine, a product of nucleic acid breakdown, to xanthosine 5'-monophosphate (XMP), so it can be reused for RNA or DNA synthesis. This Ruminiclostridium cellulolyticum (strain ATCC 35319 / DSM 5812 / JCM 6584 / H10) (Clostridium cellulolyticum) protein is Xanthine phosphoribosyltransferase.